A 319-amino-acid chain; its full sequence is Transaldolase (319 aa).

Residue Lys125 is the Schiff-base intermediate with substrate of the active site.

Belongs to the transaldolase family. Type 1 subfamily. Homodimer.

It is found in the cytoplasm. The catalysed reaction is D-sedoheptulose 7-phosphate + D-glyceraldehyde 3-phosphate = D-erythrose 4-phosphate + beta-D-fructose 6-phosphate. The protein operates within carbohydrate degradation; pentose phosphate pathway; D-glyceraldehyde 3-phosphate and beta-D-fructose 6-phosphate from D-ribose 5-phosphate and D-xylulose 5-phosphate (non-oxidative stage): step 2/3. Transaldolase is important for the balance of metabolites in the pentose-phosphate pathway. The sequence is that of Transaldolase from Ralstonia nicotianae (strain ATCC BAA-1114 / GMI1000) (Ralstonia solanacearum).